Consider the following 275-residue polypeptide: Large ribosomal subunit protein uL2 (275 aa).

Residues 223 to 275 (VAMNPVDHPHGGGEGRTSGGRHPVSPWGQPTKGYKTRSNKRTDKYIVRRRNKK) are disordered.

This sequence belongs to the universal ribosomal protein uL2 family. As to quaternary structure, part of the 50S ribosomal subunit. Forms a bridge to the 30S subunit in the 70S ribosome.

One of the primary rRNA binding proteins. Required for association of the 30S and 50S subunits to form the 70S ribosome, for tRNA binding and peptide bond formation. It has been suggested to have peptidyltransferase activity; this is somewhat controversial. Makes several contacts with the 16S rRNA in the 70S ribosome. This chain is Large ribosomal subunit protein uL2, found in Shewanella pealeana (strain ATCC 700345 / ANG-SQ1).